The chain runs to 145 residues: NADH-quinone oxidoreductase subunit A (145 aa).

3 helical membrane-spanning segments follow: residues F14 to L34, F66 to W86, and V96 to V116.

Belongs to the complex I subunit 3 family. As to quaternary structure, NDH-1 is composed of 13 different subunits. Subunits NuoA, H, J, K, L, M, N constitute the membrane sector of the complex.

It is found in the cell inner membrane. It carries out the reaction a quinone + NADH + 5 H(+)(in) = a quinol + NAD(+) + 4 H(+)(out). In terms of biological role, NDH-1 shuttles electrons from NADH, via FMN and iron-sulfur (Fe-S) centers, to quinones in the respiratory chain. The immediate electron acceptor for the enzyme in this species is believed to be ubiquinone. Couples the redox reaction to proton translocation (for every two electrons transferred, four hydrogen ions are translocated across the cytoplasmic membrane), and thus conserves the redox energy in a proton gradient. This Sodalis glossinidius (strain morsitans) protein is NADH-quinone oxidoreductase subunit A.